We begin with the raw amino-acid sequence, 780 residues long: ATP-dependent 6-phosphofructokinase, muscle type (780 aa).

Threonine 2 is modified (N-acetylthreonine). The N-terminal catalytic PFK domain 1 stretch occupies residues 2–390 (THEEHHAAKS…NWEVYKLLAH (389 aa)). Residues glycine 25, 88–89 (RC), and 118–121 (GDGS) each bind ATP. Residue aspartate 119 participates in Mg(2+) binding. Substrate-binding positions include 164–166 (SID), arginine 201, 208–210 (MGR), glutamate 264, arginine 292, and 298–301 (HVQR). Aspartate 166 serves as the catalytic Proton acceptor. A Phosphoserine modification is found at serine 377. Residues 391-401 (VRPPVTKSGSY) form an interdomain linker region. Residues 402 to 780 (TVAVMNVGAP…TRKRSGEATI (379 aa)) form a C-terminal regulatory PFK domain 2 region. Residues arginine 471 and 528-532 (TVSNN) contribute to the beta-D-fructose 2,6-bisphosphate site. Residue serine 530 is glycosylated (O-linked (GlcNAc) serine). N6-(2-hydroxyisobutyryl)lysine is present on lysine 557. Residues arginine 566, 573 to 575 (MGG), glutamate 629, arginine 655, and 661 to 664 (HMQQ) each bind beta-D-fructose 2,6-bisphosphate. Serine 667 is subject to Phosphoserine. Beta-D-fructose 2,6-bisphosphate is bound at residue arginine 735. Serine 775 is modified (phosphoserine).

This sequence belongs to the phosphofructokinase type A (PFKA) family. ATP-dependent PFK group I subfamily. Eukaryotic two domain clade 'E' sub-subfamily. Homo- and heterotetramers. Phosphofructokinase (PFK) enzyme functions as a tetramer composed of different combinations of 3 types of subunits, called PFKM (M), PFKL (L) and PFKP (P). The composition of the PFK tetramer differs according to the tissue type it is present in. The kinetic and regulatory properties of the tetrameric enzyme are dependent on the subunit composition, hence can vary across tissues. Interacts (via C-terminus) with HK1 (via N-terminal spermatogenic cell-specific region). Mg(2+) is required as a cofactor. In terms of processing, glcNAcylation decreases enzyme activity.

It is found in the cytoplasm. It catalyses the reaction beta-D-fructose 6-phosphate + ATP = beta-D-fructose 1,6-bisphosphate + ADP + H(+). It participates in carbohydrate degradation; glycolysis; D-glyceraldehyde 3-phosphate and glycerone phosphate from D-glucose: step 3/4. Its activity is regulated as follows. Allosterically activated by ADP, AMP, or fructose 2,6-bisphosphate, and allosterically inhibited by ATP or citrate. Catalyzes the phosphorylation of D-fructose 6-phosphate to fructose 1,6-bisphosphate by ATP, the first committing step of glycolysis. The protein is ATP-dependent 6-phosphofructokinase, muscle type (PFKM) of Sus scrofa (Pig).